The sequence spans 439 residues: D-erythronate kinase (439 aa).

Residues Ser-253, 366–369 (GGDV), and Gly-412 each bind ATP.

It belongs to the four-carbon acid sugar kinase family.

The catalysed reaction is D-erythronate + ATP = 4-phospho-D-erythronate + ADP + H(+). Its function is as follows. Catalyzes the ATP-dependent phosphorylation of D-erythronate to D-erythronate 4-phosphate. Can also phosphorylate D-threonate and 4-hydroxy-L-threonine, with lower efficiency. In Heliobacterium modesticaldum (strain ATCC 51547 / Ice1), this protein is D-erythronate kinase.